Here is a 658-residue protein sequence, read N- to C-terminus: MATPVVTKTAWKLQEIVAHASNVSSLVLGKASGRLLATGGDDCRVNLWSINKPNCIMSLTGHTSPVESVRLNTPEELIVAGSQSGSIRVWDLEAAKILRTLMGHKANICSLDFHPYGEFVASGSQDTNIKLWDIRRKGCVFRYRGHSQAVRCLRFSPDGKWLASAADDHTVKLWDLTAGKMMSEFPGHTGPVNVVEFHPNEYLLASGSSDRTIRFWDLEKFQVVSCIEGEPGPVRSVLFNPDGCCLYSGCQDSLRVYGWEPERCFDVVLVNWGKVADLAICNDQLIGVAFSQSNVSSYVVDLTRVTRTGTVTQDPVQANQPLTQQTPNPGVSLRRIYERPSTTCSKPQRVKHNSESERRSPSSEDDRDERESRAEIQNAEDYNEIFQPKNSISRTPPRRSEPFPAPPEDDAATVKEVSKPSPAMDVQLPQLPVPNLEVPARPSVMTSTPAPKGEPDIIPATRNEPIGLKASDFLPAVKVPQQAELVDEDAMSQIRKGHDTMFVVLTSRHKNLDTVRAVWTTGDIKTSVDSAVAINDLSVVVDLLNIVNQKASLWKLDLCTTVLPQIEKLLQSKYESYVQTGCTSLKLILQRFLPLITDILAAPPSVGVDISREERLHKCRLCFKQLKSISGLVKSKSGLSGRHGSAFRELHLLMASLD.

The interval 1–284 (MATPVVTKTA…VADLAICNDQ (284 aa)) is interaction with dynein. An interaction with centrosomes region spans residues 1 to 300 (MATPVVTKTA…SQSNVSSYVV (300 aa)). WD repeat units follow at residues 18–58 (AHAS…CIMS), 61–100 (GHTS…ILRT), 103–142 (GHKA…CVFR), 145–184 (GHSQ…MMSE), 187–226 (GHTG…VVSC), and 229–269 (GEPG…DVVL). An interaction with PAFAH1B1 region spans residues 285 to 437 (LIGVAFSQSN…LPQLPVPNLE (153 aa)). Polar residues predominate over residues 311 to 329 (VTQDPVQANQPLTQQTPNP). Disordered stretches follow at residues 311–419 (VTQD…EVSK) and 434–458 (PNLE…PDII). A compositionally biased stretch (basic and acidic residues) spans 352 to 374 (HNSESERRSPSSEDDRDERESRA). T395 carries the post-translational modification Phosphothreonine. Positions 436–658 (LEVPARPSVM…ELHLLMASLD (223 aa)) are interaction with KATNA1 and NDEL1.

This sequence belongs to the WD repeat KATNB1 family. As to quaternary structure, interacts with KATNA1. This interaction enhances the microtubule binding and severing activity of KATNA1 and also targets this activity to the centrosome. This interaction is weakly competed by KATNBL1 which has a lower affinity for it. Interacts with ASPM; the katanin complex formation KATNA1:KATNB1 is required for the association of ASPM. Interacts with dynein, microtubules, NDEL1 and PAFAH1B1. Interacts with KATNAL1; this interaction is weakly competed by KATNBL1 which has a lower affinity for it. Interacts with CAMSAP2 and CAMSAP3; leading to regulate the length of CAMSAP-decorated microtubule stretches.

The protein localises to the cytoplasm. Its subcellular location is the cytoskeleton. The protein resides in the microtubule organizing center. It is found in the centrosome. It localises to the spindle pole. The protein localises to the spindle. Participates in a complex which severs microtubules in an ATP-dependent manner. May act to target the enzymatic subunit of this complex to sites of action such as the centrosome. Microtubule severing may promote rapid reorganization of cellular microtubule arrays and the release of microtubules from the centrosome following nucleation. Microtubule release from the mitotic spindle poles may allow depolymerization of the microtubule end proximal to the spindle pole, leading to poleward microtubule flux and poleward motion of chromosome. The function in regulating microtubule dynamics at spindle poles seems to depend on the association of the katanin KATNA1:KATNB1 complex with ASPM which recruits it to microtubules. Reversely KATNA1:KATNB1 can enhance ASPM blocking activity on microtubule minus-end growth. Microtubule release within the cell body of neurons may be required for their transport into neuronal processes by microtubule-dependent motor proteins. This transport is required for axonal growth. In Mus musculus (Mouse), this protein is Katanin p80 WD40 repeat-containing subunit B1 (Katnb1).